Reading from the N-terminus, the 290-residue chain is Appressoria-specific virulence factor GAS2 (290 aa).

Positions 1–19 (MKYTSAILISAFAATNVFA) are cleaved as a signal peptide. An N-linked (GlcNAc...) asparagine glycan is attached at Asn-99. Positions 121 to 140 (LPRAGGGTSTPKGTEETGVK) are disordered.

Its subcellular location is the cytoplasm. Its function is as follows. Appressoria-specific virulence factor required for appressorial penetration in host and lesion development. The polypeptide is Appressoria-specific virulence factor GAS2 (Pyricularia oryzae (strain 70-15 / ATCC MYA-4617 / FGSC 8958) (Rice blast fungus)).